Consider the following 86-residue polypeptide: Small ribosomal subunit protein bS20 (86 aa).

The segment covering 1-27 (MANSKSAKKRATQAERRRQHNASRRSM) has biased composition (basic residues). The tract at residues 1-28 (MANSKSAKKRATQAERRRQHNASRRSMM) is disordered.

Belongs to the bacterial ribosomal protein bS20 family.

Its function is as follows. Binds directly to 16S ribosomal RNA. This is Small ribosomal subunit protein bS20 from Aliivibrio fischeri (strain MJ11) (Vibrio fischeri).